A 294-amino-acid chain; its full sequence is Lipoyl synthase (294 aa).

Residues Cys35, Cys40, Cys46, Cys61, Cys65, Cys68, and Ser275 each coordinate [4Fe-4S] cluster. In terms of domain architecture, Radical SAM core spans 46-264; the sequence is CWGGGTATVM…RDQGLALGFR (219 aa).

The protein belongs to the radical SAM superfamily. Lipoyl synthase family. It depends on [4Fe-4S] cluster as a cofactor.

Its subcellular location is the cytoplasm. It carries out the reaction [[Fe-S] cluster scaffold protein carrying a second [4Fe-4S](2+) cluster] + N(6)-octanoyl-L-lysyl-[protein] + 2 oxidized [2Fe-2S]-[ferredoxin] + 2 S-adenosyl-L-methionine + 4 H(+) = [[Fe-S] cluster scaffold protein] + N(6)-[(R)-dihydrolipoyl]-L-lysyl-[protein] + 4 Fe(3+) + 2 hydrogen sulfide + 2 5'-deoxyadenosine + 2 L-methionine + 2 reduced [2Fe-2S]-[ferredoxin]. Its pathway is protein modification; protein lipoylation via endogenous pathway; protein N(6)-(lipoyl)lysine from octanoyl-[acyl-carrier-protein]: step 2/2. Its function is as follows. Catalyzes the radical-mediated insertion of two sulfur atoms into the C-6 and C-8 positions of the octanoyl moiety bound to the lipoyl domains of lipoate-dependent enzymes, thereby converting the octanoylated domains into lipoylated derivatives. The sequence is that of Lipoyl synthase from Anaeromyxobacter dehalogenans (strain 2CP-C).